The primary structure comprises 671 residues: Probable potassium transport system protein Kup 2 (671 aa).

A run of 12 helical transmembrane segments spans residues 18-38, 60-80, 103-123, 149-169, 173-193, 218-238, 252-272, 292-312, 343-363, 373-393, 402-422, and 424-444; these read GFLI…LYAM, VSLV…LIAL, WLIV…ALTP, VTTL…ASLV, FGPI…INSF, AGFF…ALYS, WPFV…WLLA, MVIY…QALI, LYIP…VLYF, YSLA…YFLI, IAFI…ASLV, and FING…VMFI.

This sequence belongs to the HAK/KUP transporter (TC 2.A.72) family.

The protein localises to the cell membrane. It catalyses the reaction K(+)(in) + H(+)(in) = K(+)(out) + H(+)(out). Its function is as follows. Transport of potassium into the cell. Likely operates as a K(+):H(+) symporter. The protein is Probable potassium transport system protein Kup 2 of Lactococcus lactis subsp. cremoris (strain SK11).